The following is a 46-amino-acid chain: Photosystem II reaction center protein Psb30 (46 aa).

M1 is subject to N-formylmethionine. Residues 1 to 20 are Lumenal-facing; that stretch reads MGIFNGIIEFLSNINFEVIA. The chain crosses the membrane as a helical span at residues 21–38; sequence QLTMIAMIGIAGPMIIFL. Topologically, residues 39–46 are cytoplasmic; the sequence is LAVRRGNL.

Belongs to the Psb30/Ycf12 family. As to quaternary structure, PSII is composed of 1 copy each of membrane proteins PsbA, PsbB, PsbC, PsbD, PsbE, PsbF, PsbH, PsbI, PsbJ, PsbK, PsbL, PsbM, PsbT, PsbX, PsbY, PsbZ, Psb30/Ycf12, peripheral proteins PsbO, CyanoQ (PsbQ), PsbU, PsbV and a large number of cofactors. It forms dimeric complexes. Part of a photosystem II (PSII) assembly intermediate complex PSII-I; crystallized from a strain deleted of psbJ, it forms monomeric PSII before addition of the oxygen evolving complex. PSII-I includes 3 assembly factors not found in mature PSII (Psb27, Psb28 and Psb34). PSII binds multiple chlorophylls, carotenoids and specific lipids. serves as cofactor.

Its subcellular location is the cellular thylakoid membrane. In terms of biological role, a core subunit of photosystem II (PSII). PSII is a light-driven water plastoquinone oxidoreductase, using light energy to abstract electrons from H(2)O, generating a proton gradient subsequently used for ATP formation. Helps stabilize PSII. The polypeptide is Photosystem II reaction center protein Psb30 (Thermosynechococcus vestitus (strain NIES-2133 / IAM M-273 / BP-1)).